We begin with the raw amino-acid sequence, 135 residues long: Endocuticle structural glycoprotein SgAbd-2 (135 aa).

Gln-1 carries the pyrrolidone carboxylic acid modification. O-linked (HexNAc...) threonine glycosylation is found at Thr-11 and Thr-100. The Chitin-binding type R&amp;R domain maps to 32–102; it reads DGSYAYSYQT…AEGAHLPTPP (71 aa).

Component of the abdominal endocuticle. The protein is Endocuticle structural glycoprotein SgAbd-2 of Schistocerca gregaria (Desert locust).